The following is a 1021-amino-acid chain: Translation initiation factor IF-2 (1021 aa).

Residues 50–422 form a disordered region; that stretch reads AFPAEGGSAS…RMGAMVPRGN (373 aa). The span at 57–71 shows a compositional bias: gly residues; that stretch reads SASGGRPGGRPGPGN. Residues 75-95 are compositionally biased toward pro residues; the sequence is PAPPRPGLAPRPGPRPVPGRP. A compositionally biased stretch (low complexity) spans 96–112; that stretch reads GPAARPGGPAAPSAPAA. Positions 113–129 are enriched in pro residues; it reads PSAPAPGAPAASPPASQ. 3 stretches are compositionally biased toward low complexity: residues 130 to 159, 167 to 178, and 187 to 196; these read PRPIAASAAAPPPAATSIPPVSSPAAASGP, GGPAAPGRARPG, and SAPSAPSAGG. The span at 198 to 208 shows a compositional bias: pro residues; sequence RPGPRPGPRPS. Low complexity predominate over residues 219 to 233; that stretch reads SAGPRQSAGQSGSGP. Composition is skewed to pro residues over residues 234–254 and 262–273; these read ASPPRPGAPRPGPRPGGPRPG and RPSPGSMPPRPG. 2 stretches are compositionally biased toward gly residues: residues 275–291 and 306–389; these read RPGGSGGMPPRPGGSGG and GAPG…GGRG. A compositionally biased stretch (basic residues) spans 390–401; it reads RPGRQRKSKRAK. Positions 514–686 constitute a tr-type G domain; it reads IRPPVVTVMG…IILTADASLD (173 aa). The G1 stretch occupies residues 523–530; the sequence is GHVDHGKT. 523–530 contributes to the GTP binding site; the sequence is GHVDHGKT. The interval 548-552 is G2; that stretch reads GITQH. The interval 573–576 is G3; that stretch reads DTPG. GTP-binding positions include 573–577 and 627–630; these read DTPGH and NKVD. The G4 stretch occupies residues 627 to 630; sequence NKVD. A G5 region spans residues 663-665; the sequence is SAR.

The protein belongs to the TRAFAC class translation factor GTPase superfamily. Classic translation factor GTPase family. IF-2 subfamily.

The protein localises to the cytoplasm. Its function is as follows. One of the essential components for the initiation of protein synthesis. Protects formylmethionyl-tRNA from spontaneous hydrolysis and promotes its binding to the 30S ribosomal subunits. Also involved in the hydrolysis of GTP during the formation of the 70S ribosomal complex. The protein is Translation initiation factor IF-2 of Frankia alni (strain DSM 45986 / CECT 9034 / ACN14a).